A 317-amino-acid chain; its full sequence is Zinc finger protein 771 (317 aa).

The span at 1 to 17 shows a compositional bias: acidic residues; that stretch reads MPGEQQAEEEEEEEMQE. The disordered stretch occupies residues 1–63; the sequence is MPGEQQAEEE…APSADPARPH (63 aa). A Glycyl lysine isopeptide (Lys-Gly) (interchain with G-Cter in SUMO2) cross-link involves residue Lys-33. Positions 33-49 are enriched in basic and acidic residues; that stretch reads KYEVVKLKIPMDNKEVP. 8 consecutive C2H2-type zinc fingers follow at residues 63 to 85, 91 to 113, 119 to 141, 147 to 169, 175 to 197, 203 to 225, 231 to 253, and 259 to 281; these read HACPDCGRAFARRSTLAKHARTH, FGCTECGRRFSQKSALTKHGRTH, YECPECDKRFSAASNLRQHRRRH, YACAHCGRRFAQSSNYAQHLRVH, YACPDCGRAFGGSSCLARHRRTH, YACADCGTRFAQSSALAKHRRVH, HRCAVCGRRFGHRSNLAEHARTH, and YPCAECGRRFRLSSHFIRHRRAH.

The protein belongs to the krueppel C2H2-type zinc-finger protein family.

The protein resides in the nucleus. Its function is as follows. May be involved in transcriptional regulation. This Homo sapiens (Human) protein is Zinc finger protein 771 (ZNF771).